Here is a 271-residue protein sequence, read N- to C-terminus: 1,4-dihydroxy-2-naphthoyl-CoA synthase (271 aa).

Substrate is bound by residues 71–75, tyrosine 83, 115–119, threonine 141, serine 147, tyrosine 244, and lysine 259; these read SGGDQ and YAIGG. Residue 140–142 participates in hydrogencarbonate binding; it reads QTG. Positions 250 to 263 are enriched in basic and acidic residues; sequence KEGRDSFKEKRKPD. Residues 250–271 form a disordered region; sequence KEGRDSFKEKRKPDFGQFPRFP.

This sequence belongs to the enoyl-CoA hydratase/isomerase family. MenB subfamily. Hydrogencarbonate is required as a cofactor.

The catalysed reaction is 2-succinylbenzoyl-CoA + H(+) = 1,4-dihydroxy-2-naphthoyl-CoA + H2O. It participates in quinol/quinone metabolism; 1,4-dihydroxy-2-naphthoate biosynthesis; 1,4-dihydroxy-2-naphthoate from chorismate: step 6/7. Its pathway is quinol/quinone metabolism; menaquinone biosynthesis. In terms of biological role, converts o-succinylbenzoyl-CoA (OSB-CoA) to 1,4-dihydroxy-2-naphthoyl-CoA (DHNA-CoA). The sequence is that of 1,4-dihydroxy-2-naphthoyl-CoA synthase from Bacillus subtilis (strain 168).